The following is a 225-amino-acid chain: Heptaprenylglyceryl phosphate synthase (225 aa).

Sn-glycerol 1-phosphate is bound at residue Lys-6. Mg(2+) is bound by residues Asp-8 and Thr-34. Sn-glycerol 1-phosphate contacts are provided by residues 153-158 (YVEYSG), Gly-183, and 203-204 (GN).

The protein belongs to the GGGP/HepGP synthase family. Group I subfamily. Homodimer. Mg(2+) is required as a cofactor.

It catalyses the reaction sn-glycerol 1-phosphate + all-trans-heptaprenyl diphosphate = 3-heptaprenyl-sn-glycero-1-phosphate + diphosphate. It functions in the pathway membrane lipid metabolism; glycerophospholipid metabolism. Functionally, prenyltransferase that catalyzes in vivo the transfer of the heptaprenyl moiety of heptaprenyl pyrophosphate (HepPP; 35 carbon atoms) to the C3 hydroxyl of sn-glycerol-1-phosphate (G1P), producing heptaprenylglyceryl phosphate (HepGP). This reaction is an ether-bond-formation step in the biosynthesis of archaea-type G1P-based membrane lipids found in Bacillales. The protein is Heptaprenylglyceryl phosphate synthase of Listeria innocua serovar 6a (strain ATCC BAA-680 / CLIP 11262).